Here is a 367-residue protein sequence, read N- to C-terminus: Leucine-rich repeat-containing protein 28 (367 aa).

9 LRR repeats span residues 16-36 (KHKN…ELLK), 42-63 (YLER…LAQK), 66-87 (NLVE…IGSL), 89-111 (KLQS…GRLK), 112-133 (SLRH…IGKL), 135-156 (ELQT…LYQC), 158-179 (SLQY…LCQL), 181-202 (SLNE…LGRS), and 204-226 (ELQY…LYNK).

The polypeptide is Leucine-rich repeat-containing protein 28 (lrrc28) (Xenopus tropicalis (Western clawed frog)).